Consider the following 201-residue polypeptide: MDLISVILISIGLSMDAFAVSITNGAMISKVTASEGIRIGLFFGGFQALMPLIGWSIGIKFESYIAALDHWIALILLSIIGGKMIYDSVKENQDHKDEIACDYAAGEKKCLNNKTLILLAIATSIDALAVGVSFAFLKVSIINTIIIIGSITFVICFIGVMIGKKCGKLLKKRAEILGGVVLILIGVKIFIQHTNILSYIF.

The next 6 membrane-spanning stretches (helical) occupy residues 3 to 23 (LISVILISIGLSMDAFAVSIT), 39 to 59 (IGLFFGGFQALMPLIGWSIGI), 65 to 85 (IAALDHWIALILLSIIGGKMI), 116 to 136 (LILLAIATSIDALAVGVSFAF), 141 to 161 (IINTIIIIGSITFVICFIGVM), and 176 to 196 (ILGGVVLILIGVKIFIQHTNI).

This sequence belongs to the MntP (TC 9.B.29) family.

The protein resides in the cell membrane. Probably functions as a manganese efflux pump. This Clostridium botulinum (strain Hall / ATCC 3502 / NCTC 13319 / Type A) protein is Putative manganese efflux pump MntP 2.